The primary structure comprises 196 residues: Carnitine operon protein CaiE (196 aa).

The disordered stretch occupies residues 177-196 (RQMEENRPRLQGTTDVMPKR).

The protein belongs to the transferase hexapeptide repeat family.

It participates in amine and polyamine metabolism; carnitine metabolism. In terms of biological role, overproduction of CaiE stimulates the activity of CaiB and CaiD. This is Carnitine operon protein CaiE from Escherichia coli O17:K52:H18 (strain UMN026 / ExPEC).